A 433-amino-acid polypeptide reads, in one-letter code: Probable exopolygalacturonase X (433 aa).

The first 21 residues, 1 to 21 (MKLTQATTLLLSLGLSLPVEG), serve as a signal peptide directing secretion. Positions 30–54 (VGPKPPFRPLPASTPRNKTCQVQSN) are disordered. Polar residues predominate over residues 43–54 (TPRNKTCQVQSN). Residues Asn-46, Asn-127, and Asn-197 are each glycosylated (N-linked (GlcNAc...) asparagine). One copy of the PbH1 1 repeat lies at 229 to 250 (SSNIVIQNSVINNGDDCVSFKP). The active-site Proton donor is Asp-243. Cys-245 and Cys-262 are joined by a disulfide. N-linked (GlcNAc...) asparagine glycans are attached at residues Asn-251 and Asn-263. The PbH1 2 repeat unit spans residues 252–272 (STEILVQNLHCNGSHGISVGS). His-266 is an active-site residue. 5 N-linked (GlcNAc...) asparagine glycosylation sites follow: Asn-290, Asn-295, Asn-327, Asn-352, and Asn-362. The PbH1 3 repeat unit spans residues 325–346 (VQNITYDKMYIENVDWAIEVTQ). A PbH1 4 repeat occupies 360 to 403 (PSNLTISDVYFNDLTGVTSGKNDPNVGTIICSSPDVCSGIHATN). Cys-390 and Cys-396 are joined by a disulfide.

Belongs to the glycosyl hydrolase 28 family.

Its subcellular location is the secreted. It catalyses the reaction [(1-&gt;4)-alpha-D-galacturonosyl](n) + H2O = alpha-D-galacturonate + [(1-&gt;4)-alpha-D-galacturonosyl](n-1). In terms of biological role, specific in hydrolyzing the terminal glycosidic bond of polygalacturonic acid and oligogalacturonates. In Aspergillus flavus (strain ATCC 200026 / FGSC A1120 / IAM 13836 / NRRL 3357 / JCM 12722 / SRRC 167), this protein is Probable exopolygalacturonase X (pgaX).